The chain runs to 254 residues: Alcohol dehydrogenase (254 aa).

Residue 10 to 33 participates in NAD(+) binding; sequence FVAGLGGIGLDTSREIVKSGPKNL. S138 contacts substrate. The active-site Proton acceptor is the Y151.

This sequence belongs to the short-chain dehydrogenases/reductases (SDR) family. As to quaternary structure, homodimer.

The catalysed reaction is a primary alcohol + NAD(+) = an aldehyde + NADH + H(+). It catalyses the reaction a secondary alcohol + NAD(+) = a ketone + NADH + H(+). This Drosophila borealis (Fruit fly) protein is Alcohol dehydrogenase (Adh).